A 414-amino-acid polypeptide reads, in one-letter code: Imidazolonepropionase (414 aa).

Fe(3+)-binding residues include His-73 and His-75. Zn(2+) contacts are provided by His-73 and His-75. 3 residues coordinate 4-imidazolone-5-propanoate: Arg-82, Tyr-145, and His-178. Tyr-145 contributes to the N-formimidoyl-L-glutamate binding site. His-249 is a binding site for Fe(3+). Zn(2+) is bound at residue His-249. Gln-252 is a 4-imidazolone-5-propanoate binding site. Residue Asp-324 coordinates Fe(3+). Zn(2+) is bound at residue Asp-324. The N-formimidoyl-L-glutamate site is built by Asn-326 and Gly-328. Ser-329 contributes to the 4-imidazolone-5-propanoate binding site.

It belongs to the metallo-dependent hydrolases superfamily. HutI family. Zn(2+) is required as a cofactor. Requires Fe(3+) as cofactor.

The protein resides in the cytoplasm. It carries out the reaction 4-imidazolone-5-propanoate + H2O = N-formimidoyl-L-glutamate. It participates in amino-acid degradation; L-histidine degradation into L-glutamate; N-formimidoyl-L-glutamate from L-histidine: step 3/3. Its function is as follows. Catalyzes the hydrolytic cleavage of the carbon-nitrogen bond in imidazolone-5-propanoate to yield N-formimidoyl-L-glutamate. It is the third step in the universal histidine degradation pathway. The chain is Imidazolonepropionase from Shewanella denitrificans (strain OS217 / ATCC BAA-1090 / DSM 15013).